Consider the following 1116-residue polypeptide: ELKS/Rab6-interacting/CAST family member 1 (1116 aa).

The disordered stretch occupies residues 1-54; that stretch reads MYGSARSVGKVEPSSQSPGRSPRLPRSPRLGHRRTNSTGGSSGSSVGGGSGKTL. Lysine 10 carries the N6-acetyllysine modification. Low complexity predominate over residues 13 to 28; it reads PSSQSPGRSPRLPRSP. Phosphoserine occurs at positions 17, 21, and 37. The residue at position 38 (threonine 38) is a Phosphothreonine. A compositionally biased stretch (gly residues) spans 40 to 51; that stretch reads GSSGSSVGGGSG. Phosphoserine occurs at positions 55, 75, and 94. A coiled-coil region spans residues 144 to 988; that stretch reads RQARDNTIMD…RMKLMADNYE (845 aa). A compositionally biased stretch (basic and acidic residues) spans 590–602; the sequence is KEKQMSSLKERVK. Disordered stretches follow at residues 590–609 and 814–836; these read KEKQMSSLKERVKSLQADTT and ARRREDNLNDSSQQLQDSLRKKD. Position 1005 is a phosphoserine (serine 1005). Threonine 1046 bears the Phosphothreonine mark. The FIP-RBD domain occupies 1046–1108; it reads TPPASYNLDD…DHCPDILEQV (63 aa). A coiled-coil region spans residues 1060–1100; it reads WENELQKMTRGQLQDELEKGERDNAELQEFANAILQQIADH.

As to quaternary structure, part of a complex with CHUK, IKBKB and IKBKG. Interacts with CHUK, IKBKB and IKBKG. The interaction with IKBKG is independent of CHUK and IKBKB. Interacts with NFKBIA. Isoform 4 interacts with PPFIA1, and through its C-terminus with the PDZ domains of RIMS1 and RIMS2. Interacts with ERC2/CAST1. Interacts with the GTB-bound forms of RAB6A isoform 1 and isoform 2 and with RAB6B. The interaction was strongest with RAB6B, followed by RAB6A isoform 2 and weakest with RAB6A isoform 1. Interacts with SDCCAG8. Part of a cortical microtubule stabilization complex (CMSC) composed of KANK1, PPFIA1, PPFIBP1, ERC1/ELKS, PHLDB2/LL5beta, CLASPs, KIF21A and possibly additional interactors; within CMSCs KANK1 and PHLDB2/LL5beta appear to be the core components for targeting of microtubule-binding proteins KIF21A and CLASPs, whereas PPFIA1, PPFIBP1 and ERC1/ELKS serve as scaffolds for protein clustering. In terms of tissue distribution, widely expressed. Isoform 2 and isoform 4 are abundantly expressed in brain. Isoform 1 and isoform 3 are predominantly expressed in testis and thyroid, and isoform 1 predominates in other tissues tested.

The protein localises to the cytoplasm. Its subcellular location is the cytoskeleton. The protein resides in the microtubule organizing center. It is found in the centrosome. It localises to the membrane. The protein localises to the golgi apparatus membrane. Its subcellular location is the presynaptic cell membrane. The protein resides in the cell projection. It is found in the podosome. Its function is as follows. Regulatory subunit of the IKK complex. Probably recruits IkappaBalpha/NFKBIA to the complex. May be involved in the organization of the cytomatrix at the nerve terminals active zone (CAZ) which regulates neurotransmitter release. May be involved in vesicle trafficking at the CAZ. May be involved in Rab-6 regulated endosomes to Golgi transport. In Homo sapiens (Human), this protein is ELKS/Rab6-interacting/CAST family member 1 (ERC1).